Consider the following 558-residue polypeptide: Dihydroxy-acid dehydratase (558 aa).

Mg(2+) is bound at residue aspartate 78. [2Fe-2S] cluster is bound at residue cysteine 119. Residues aspartate 120 and lysine 121 each contribute to the Mg(2+) site. Lysine 121 bears the N6-carboxylysine mark. Position 191 (cysteine 191) interacts with [2Fe-2S] cluster. Glutamate 443 serves as a coordination point for Mg(2+). Serine 469 acts as the Proton acceptor in catalysis.

It belongs to the IlvD/Edd family. Homodimer. [2Fe-2S] cluster is required as a cofactor. It depends on Mg(2+) as a cofactor.

The catalysed reaction is (2R)-2,3-dihydroxy-3-methylbutanoate = 3-methyl-2-oxobutanoate + H2O. It catalyses the reaction (2R,3R)-2,3-dihydroxy-3-methylpentanoate = (S)-3-methyl-2-oxopentanoate + H2O. It functions in the pathway amino-acid biosynthesis; L-isoleucine biosynthesis; L-isoleucine from 2-oxobutanoate: step 3/4. It participates in amino-acid biosynthesis; L-valine biosynthesis; L-valine from pyruvate: step 3/4. Functions in the biosynthesis of branched-chain amino acids. Catalyzes the dehydration of (2R,3R)-2,3-dihydroxy-3-methylpentanoate (2,3-dihydroxy-3-methylvalerate) into 2-oxo-3-methylpentanoate (2-oxo-3-methylvalerate) and of (2R)-2,3-dihydroxy-3-methylbutanoate (2,3-dihydroxyisovalerate) into 2-oxo-3-methylbutanoate (2-oxoisovalerate), the penultimate precursor to L-isoleucine and L-valine, respectively. This chain is Dihydroxy-acid dehydratase, found in Solidesulfovibrio magneticus (strain ATCC 700980 / DSM 13731 / RS-1) (Desulfovibrio magneticus).